Here is a 354-residue protein sequence, read N- to C-terminus: Ornithine carbamoyltransferase, catabolic (354 aa).

Carbamoyl phosphate is bound by residues 67 to 70 (STRT), Q94, R118, and 145 to 148 (HPTQ). Residues N177, D241, and 245 to 246 (SM) contribute to the L-ornithine site. Residues 284–285 (CL) and R329 each bind carbamoyl phosphate.

Belongs to the aspartate/ornithine carbamoyltransferase superfamily. OTCase family.

The protein localises to the cytoplasm. The catalysed reaction is carbamoyl phosphate + L-ornithine = L-citrulline + phosphate + H(+). Its pathway is amino-acid degradation; L-arginine degradation via ADI pathway; carbamoyl phosphate from L-arginine: step 2/2. Reversibly catalyzes the transfer of the carbamoyl group from carbamoyl phosphate (CP) to the N(epsilon) atom of ornithine (ORN) to produce L-citrulline. The polypeptide is Ornithine carbamoyltransferase, catabolic (arcB) (Lactococcus lactis subsp. cremoris (Streptococcus cremoris)).